A 270-amino-acid polypeptide reads, in one-letter code: Fibroblast growth factor 5 (270 aa).

The signal sequence occupies residues methionine 1–alanine 20. A disordered region spans residues leucine 26–serine 84. The span at asparagine 40–threonine 49 shows a compositional bias: gly residues. Residues serine 50–glycine 70 show a composition bias toward low complexity. Residues glycine 75 to serine 84 are compositionally biased toward polar residues. Asparagine 112 is a glycosylation site (N-linked (GlcNAc...) asparagine). The tract at residues glutamate 237 to serine 257 is disordered.

Belongs to the heparin-binding growth factors family. In terms of assembly, interacts with FGFR1 and FGFR2. Affinity between fibroblast growth factors (FGFs) and their receptors is increased by heparan sulfate glycosaminoglycans that function as coreceptors.

It is found in the secreted. Its function is as follows. Plays an important role in the regulation of cell proliferation and cell differentiation. Required for normal regulation of the hair growth cycle. Functions as an inhibitor of hair elongation by promoting progression from anagen, the growth phase of the hair follicle, into catagen the apoptosis-induced regression phase. This Canis lupus familiaris (Dog) protein is Fibroblast growth factor 5 (FGF5).